Here is a 414-residue protein sequence, read N- to C-terminus: 5-aminolevulinate synthase (414 aa).

The substrate site is built by Arg22, Ser133, and Lys152. Positions 185, 213, and 241 each coordinate pyridoxal 5'-phosphate. Residue Lys244 is part of the active site. Lys244 is subject to N6-(pyridoxal phosphate)lysine. Thr273 and Thr274 together coordinate pyridoxal 5'-phosphate. Thr359 is a binding site for substrate.

It belongs to the class-II pyridoxal-phosphate-dependent aminotransferase family. Homodimer. Requires pyridoxal 5'-phosphate as cofactor.

The enzyme catalyses succinyl-CoA + glycine + H(+) = 5-aminolevulinate + CO2 + CoA. It participates in porphyrin-containing compound metabolism; protoporphyrin-IX biosynthesis; 5-aminolevulinate from glycine: step 1/1. This is 5-aminolevulinate synthase (hemA) from Rickettsia felis (strain ATCC VR-1525 / URRWXCal2) (Rickettsia azadi).